The primary structure comprises 229 residues: MKQVRLPSSATVRAACAVAVAALAGCAQIPRDPIIQQPMTAQPPMPMSMQAPGSIYNPGYAGRPLFEDQRPRNIGDILTIMIAENINATKSSGANTNRQGNTDFNVPTAGFLGGLFAKANLSATGANKFAATGGASAANTFNGTITVTVTNVLPNGNLVVSGEKQMLINQGNEFVRFSGVVNPNTISGANSVYSTQVADAKIEYSSKGYINEAETMGWLQRFFLNIAPW.

Residues 1–25 (MKQVRLPSSATVRAACAVAVAALAG) form the signal peptide. A lipid anchor (N-palmitoyl cysteine) is attached at Cys-26. Residue Cys-26 is the site of S-diacylglycerol cysteine attachment.

The protein belongs to the FlgH family. The basal body constitutes a major portion of the flagellar organelle and consists of four rings (L,P,S, and M) mounted on a central rod.

It localises to the cell outer membrane. Its subcellular location is the bacterial flagellum basal body. Its function is as follows. Assembles around the rod to form the L-ring and probably protects the motor/basal body from shearing forces during rotation. This chain is Flagellar L-ring protein, found in Burkholderia orbicola (strain AU 1054).